Here is a 56-residue protein sequence, read N- to C-terminus: Large ribosomal subunit protein bL33A (56 aa).

Belongs to the bacterial ribosomal protein bL33 family.

This is Large ribosomal subunit protein bL33A from Sorangium cellulosum (strain So ce56) (Polyangium cellulosum (strain So ce56)).